The following is a 384-amino-acid chain: tRNA-specific 2-thiouridylase MnmA (384 aa).

Residues 18–25 (AMSGGVDS) and Leu44 each bind ATP. Residue Cys112 is the Nucleophile of the active site. An intrachain disulfide couples Cys112 to Cys209. Gly136 lines the ATP pocket. The interaction with tRNA stretch occupies residues 159–161 (RDQ). Catalysis depends on Cys209, which acts as the Cysteine persulfide intermediate.

This sequence belongs to the MnmA/TRMU family.

Its subcellular location is the cytoplasm. It catalyses the reaction S-sulfanyl-L-cysteinyl-[protein] + uridine(34) in tRNA + AH2 + ATP = 2-thiouridine(34) in tRNA + L-cysteinyl-[protein] + A + AMP + diphosphate + H(+). Functionally, catalyzes the 2-thiolation of uridine at the wobble position (U34) of tRNA, leading to the formation of s(2)U34. This Methylobacterium radiotolerans (strain ATCC 27329 / DSM 1819 / JCM 2831 / NBRC 15690 / NCIMB 10815 / 0-1) protein is tRNA-specific 2-thiouridylase MnmA.